Here is a 290-residue protein sequence, read N- to C-terminus: Inositol-1-monophosphatase (290 aa).

Mg(2+) is bound by residues Glu-83, Asp-104, Ile-106, and Asp-107. Glu-83 is a binding site for substrate. Substrate contacts are provided by residues 106–109 (IDGT), Arg-206, and Asp-235. Asp-235 contacts Mg(2+).

This sequence belongs to the inositol monophosphatase superfamily. It depends on Mg(2+) as a cofactor.

The enzyme catalyses a myo-inositol phosphate + H2O = myo-inositol + phosphate. The sequence is that of Inositol-1-monophosphatase (suhB) from Mycobacterium bovis (strain ATCC BAA-935 / AF2122/97).